The sequence spans 360 residues: Mannose-1-phosphate guanyltransferase beta-B (360 aa).

This sequence belongs to the transferase hexapeptide repeat family.

It catalyses the reaction alpha-D-mannose 1-phosphate + GTP + H(+) = GDP-alpha-D-mannose + diphosphate. It participates in nucleotide-sugar biosynthesis; GDP-alpha-D-mannose biosynthesis; GDP-alpha-D-mannose from alpha-D-mannose 1-phosphate (GTP route): step 1/1. Catalyzes the formation of GDP-mannose, an essential precursor of glycan moieties of glycoproteins and glycolipids. The chain is Mannose-1-phosphate guanyltransferase beta-B (gmppb-b) from Xenopus laevis (African clawed frog).